Reading from the N-terminus, the 220-residue chain is MEEEELSKLLANVKIDPSLTSRISQIDSFKLSELMVLKTDIETQLEAYFSVLEQQGIGMDSALVTPDGYPRSDVDVLQVTMIRKNVNMLKNDLNHLLQRSHVLLNQHFDNMNVKSNQDARRNNDDQAIQYTIPFAFISEVVPGSPSDKADIKVDDKLISIGNVHAANHSKLQNIQMVVMKNEDRPLPVLLLREGQILKTSLTPSRNWNGRGLLGCRIQEL.

The PDZ domain maps to 119–196 (ARRNNDDQAI…PVLLLREGQI (78 aa)).

Belongs to the proteasome subunit p27 family. Part of a transient complex containing NAS2, RPT4 and RPT5 formed during the assembly of the 26S proteasome.

Its function is as follows. Acts as a chaperone during the assembly of the 26S proteasome, specifically of the base subcomplex of the 19S regulatory complex (RC). During the base subcomplex assembly is part of a NAS2:RPT4:RPT5 module; NAS2 is released during the further base assembly process. The chain is Probable 26S proteasome regulatory subunit p27 (NAS2) from Saccharomyces cerevisiae (strain ATCC 204508 / S288c) (Baker's yeast).